We begin with the raw amino-acid sequence, 302 residues long: HTH-type transcriptional regulator ArgP (302 aa).

One can recognise an HTH lysR-type domain in the interval 4–60 (PDYRTLQALDAVIRERGFERAAQKLCITQSAVSQRIKQLENLFGQPLLVRTVPPRPT). The H-T-H motif DNA-binding region spans 21–40 (FERAAQKLCITQSAVSQRIK).

The protein belongs to the LysR transcriptional regulatory family. In terms of assembly, homodimer.

Functionally, controls the transcription of genes involved in arginine and lysine metabolism. This is HTH-type transcriptional regulator ArgP from Yersinia pseudotuberculosis serotype O:1b (strain IP 31758).